Here is an 846-residue protein sequence, read N- to C-terminus: cGMP-dependent protein kinase (846 aa).

Residues 1–22 form an autoinhibitory segment region; the sequence is MRCNERNKKKAIFSNDDFSGED. CNMP-binding domain regions lie at residues 51–166, 169–268, 288–391, and 411–510; these read VCST…FIDS, VFDM…IVLG, IFRQ…LGDN, and IFRY…LQII. Positions 106, 115, 116, 118, 125, and 126 each coordinate 3',5'-cyclic GMP. 3',5'-cyclic GMP contacts are provided by Arg-466, Gly-475, Glu-476, Ala-478, Arg-485, and Thr-486. The 258-residue stretch at 534–791 folds into the Protein kinase domain; it reads LETERIIGRG…FKDIKEHAFF (258 aa). ATP is bound by residues 540 to 548 and Lys-563; that span reads IGRGTFGTV. Asp-657 (proton acceptor) is an active-site residue. Residues 792–846 enclose the AGC-kinase C-terminal domain; that stretch reads GNFNWDKLAGRLLEPPLVSKGETYAEDIDIKQIEEEDALNEGEPLDGDDSWDVDF. The tract at residues 824-846 is disordered; that stretch reads IEEEDALNEGEPLDGDDSWDVDF. Over residues 825–846 the composition is skewed to acidic residues; sequence EEEDALNEGEPLDGDDSWDVDF.

Belongs to the protein kinase superfamily. AGC Ser/Thr protein kinase family. cGMP subfamily. Monomer. It depends on Mg(2+) as a cofactor. Autophosphorylated.

The protein localises to the cytoplasm. It is found in the endoplasmic reticulum membrane. The enzyme catalyses L-seryl-[protein] + ATP = O-phospho-L-seryl-[protein] + ADP + H(+). It catalyses the reaction L-threonyl-[protein] + ATP = O-phospho-L-threonyl-[protein] + ADP + H(+). Its activity is regulated as follows. Activated by cGMP. Not activated by cAMP. cGMP binding allosterically triggers a conformational change at the alpha C-helix of cGMP-binding domain 4, which bridges the regulatory and catalytic domains, causing the capping triad, composed of Arg-477, Gln-525 and Asp-526, to form and stabilize the active conformation. The cGMP-binding domains acts cooperatively to activate PKG. Its function is as follows. Serine/threonine protein kinase which acts as a downstream effector of the second messenger cGMP. Controls the release of Ca(2+) from intracellular stores by regulating phosphoinositide biosynthesis. Ca(2+) signals are essential for merozoite and sporozoite invasion and egress from host hepatocytes and erythrocytes, and, in the mosquito vector, for gametocyte activation, and ookinete and sporozoite motility. During the host liver stage, regulates the initial invasion of host hepatocytes by sporozoites by regulating sporozoite motility and microneme exocytosis. Following parasite development in the hepatocytes, required for the release of merosomes, a vesicle containing the mature merozoites. During the asexual blood stage, required for the progression from schizont to the ring stage following merozoite invasion of host erythrocytes and for merozoite egress. Regulates merozoite egress by promoting the release of exonemes and micronemes which contain proteins essential for egress. Phosphorylates CDPK1 predominantly at the late schizont stage; phosphorylation at 'Ser-64' regulates CDPK1 protein-protein interaction and phosphorylation at 'Thr-231' may regulate CDPK1 kinase activity. In the mosquito vector, required for the initiation of gametogenesis induced by xanthurenic acid, specifically the gametocyte differentiation from the crescent-shaped form to the spherical form. Required for the gliding motility of ookinetes to reach and penetrate the midgut epithelium by promoting Ca(2+)-mediated activation of CDPK1 and CDPK4. Also required for microneme secretion in ookinete by promoting Ca(2+)-mediated activation of CDPK3. The polypeptide is cGMP-dependent protein kinase (Plasmodium vivax (strain Salvador I)).